Consider the following 154-residue polypeptide: Protein X (154 aa).

The mitochondrial targeting sequence stretch occupies residues 68–117; sequence PCALRFTSARRMETTVNAHQILPKVLHKRTLGLSAMSTTDLEAYFKDCLF.

Belongs to the orthohepadnavirus protein X family. In terms of assembly, may form homodimer. May interact with host CEBPA, CFLAR, CREB1, DDB1, E4F1, HBXIP, HSPD1/HSP60, NFKBIA, POLR2E and SMAD4. Interacts with host SMC5-SMC6 complex and induces its degradation. Interacts with host TRPC4AP; leading to prevent ubiquitination of TRPC4AP. Interacts with host PLSCR1; this interaction promotes ubiquitination and degradation of HBx and impairs HBx-mediated cell proliferation. A fraction may be phosphorylated in insect cells and HepG2 cells, a human hepatoblastoma cell line. Phosphorylated in vitro by host protein kinase C or mitogen-activated protein kinase. N-acetylated in insect cells.

Its subcellular location is the host cytoplasm. It is found in the host nucleus. The protein localises to the host mitochondrion. Its function is as follows. Multifunctional protein that plays a role in silencing host antiviral defenses and promoting viral transcription. Does not seem to be essential for HBV infection. May be directly involved in development of cirrhosis and liver cancer (hepatocellular carcinoma). Most of cytosolic activities involve modulation of cytosolic calcium. The effect on apoptosis is controversial depending on the cell types in which the studies have been conducted. May induce apoptosis by localizing in mitochondria and causing loss of mitochondrial membrane potential. May also modulate apoptosis by binding host CFLAR, a key regulator of the death-inducing signaling complex (DISC). Promotes viral transcription by using the host E3 ubiquitin ligase DDB1 to target the SMC5-SMC6 complex to proteasomal degradation. This host complex would otherwise bind to viral episomal DNA, and prevents its transcription. Moderately stimulates transcription of many different viral and cellular transcription elements. Promoters and enhancers stimulated by HBx contain DNA binding sites for NF-kappa-B, AP-1, AP-2, c-EBP, ATF/CREB, or the calcium-activated factor NF-AT. This chain is Protein X, found in Hepatitis B virus genotype E (isolate Cote d'Ivoire/ABI-212/2003) (HBV-E).